We begin with the raw amino-acid sequence, 340 residues long: Tetraacyldisaccharide 4'-kinase (340 aa).

50 to 57 contacts ATP; sequence HGGGAGKT.

This sequence belongs to the LpxK family.

It catalyses the reaction a lipid A disaccharide + ATP = a lipid IVA + ADP + H(+). The protein operates within glycolipid biosynthesis; lipid IV(A) biosynthesis; lipid IV(A) from (3R)-3-hydroxytetradecanoyl-[acyl-carrier-protein] and UDP-N-acetyl-alpha-D-glucosamine: step 6/6. Its function is as follows. Transfers the gamma-phosphate of ATP to the 4'-position of a tetraacyldisaccharide 1-phosphate intermediate (termed DS-1-P) to form tetraacyldisaccharide 1,4'-bis-phosphate (lipid IVA). In Rhodopseudomonas palustris (strain BisA53), this protein is Tetraacyldisaccharide 4'-kinase.